The sequence spans 118 residues: Acidic phospholipase A2 PA-3 (118 aa).

Cystine bridges form between Cys11–Cys71, Cys27–Cys117, Cys29–Cys45, Cys44–Cys98, Cys51–Cys91, Cys60–Cys84, and Cys78–Cys89. 3 residues coordinate Ca(2+): Tyr28, Gly30, and Gly32. The active site involves His48. Asp49 contacts Ca(2+). The active site involves Asp92.

It belongs to the phospholipase A2 family. Group I subfamily. D49 sub-subfamily. Ca(2+) is required as a cofactor. As to expression, expressed by the venom gland.

The protein localises to the secreted. It catalyses the reaction a 1,2-diacyl-sn-glycero-3-phosphocholine + H2O = a 1-acyl-sn-glycero-3-phosphocholine + a fatty acid + H(+). In terms of biological role, PLA2 catalyzes the calcium-dependent hydrolysis of the 2-acyl groups in 3-sn-phosphoglycerides. The chain is Acidic phospholipase A2 PA-3 from Pseudechis australis (Mulga snake).